A 487-amino-acid polypeptide reads, in one-letter code: Bifunctional protein HldE (487 aa).

The ribokinase stretch occupies residues 1–329 (MLHAVETAFY…GALLTDATYE (329 aa)). 204–207 (NRGE) is an ATP binding site. The active site involves D274. Residues 356–487 (FTNGCFDLLH…GIVQRISAQK (132 aa)) form a cytidylyltransferase region.

This sequence in the N-terminal section; belongs to the carbohydrate kinase PfkB family. The protein in the C-terminal section; belongs to the cytidylyltransferase family. In terms of assembly, homodimer.

It catalyses the reaction D-glycero-beta-D-manno-heptose 7-phosphate + ATP = D-glycero-beta-D-manno-heptose 1,7-bisphosphate + ADP + H(+). It carries out the reaction D-glycero-beta-D-manno-heptose 1-phosphate + ATP + H(+) = ADP-D-glycero-beta-D-manno-heptose + diphosphate. It functions in the pathway nucleotide-sugar biosynthesis; ADP-L-glycero-beta-D-manno-heptose biosynthesis; ADP-L-glycero-beta-D-manno-heptose from D-glycero-beta-D-manno-heptose 7-phosphate: step 1/4. Its pathway is nucleotide-sugar biosynthesis; ADP-L-glycero-beta-D-manno-heptose biosynthesis; ADP-L-glycero-beta-D-manno-heptose from D-glycero-beta-D-manno-heptose 7-phosphate: step 3/4. Its function is as follows. Catalyzes the phosphorylation of D-glycero-D-manno-heptose 7-phosphate at the C-1 position to selectively form D-glycero-beta-D-manno-heptose-1,7-bisphosphate. Functionally, catalyzes the ADP transfer from ATP to D-glycero-beta-D-manno-heptose 1-phosphate, yielding ADP-D-glycero-beta-D-manno-heptose. This is Bifunctional protein HldE from Magnetococcus marinus (strain ATCC BAA-1437 / JCM 17883 / MC-1).